We begin with the raw amino-acid sequence, 336 residues long: Heme A synthase (336 aa).

8 consecutive transmembrane segments (helical) span residues 12 to 32 (LKLWLITLFSLIVLMVAVGGL), 97 to 117 (LLARFVGLFTLVPLLFFTLYF), 130 to 150 (IFFLVCLQGFIGWYMVSSGLI), 161 to 181 (SIHLSLALFILCLIFWYILDI), 194 to 214 (LFLLFILKLIVLQIVLGAFLS), 256 to 276 (FLHRSTAYLLLFFIIILNFIY), 285 to 305 (YVLFFDVAILFQIFLGIITLI), and 310 to 330 (ITYASLHQLGSILVLSSYFLI). H258 is a binding site for heme. Residue H316 participates in heme binding.

It belongs to the COX15/CtaA family. Type 2 subfamily. As to quaternary structure, interacts with CtaB. Heme b is required as a cofactor.

The protein localises to the cell membrane. It carries out the reaction Fe(II)-heme o + 2 A + H2O = Fe(II)-heme a + 2 AH2. It functions in the pathway porphyrin-containing compound metabolism; heme A biosynthesis; heme A from heme O: step 1/1. Functionally, catalyzes the conversion of heme O to heme A by two successive hydroxylations of the methyl group at C8. The first hydroxylation forms heme I, the second hydroxylation results in an unstable dihydroxymethyl group, which spontaneously dehydrates, resulting in the formyl group of heme A. In Pelagibacter ubique (strain HTCC1062), this protein is Heme A synthase.